A 361-amino-acid chain; its full sequence is Caveolae-associated protein 4 (361 aa).

Residues 1–21 (MEHNGSASNADKIHQNRLSNV) are disordered. Residues 100–124 (IKDVKARVEKQQTHVKKVEAKQEEI) are a coiled coil. 3 positions are modified to phosphoserine: S152, S171, and S172. Residues 204 to 248 (ENMQKTRQNFDKKVNRIRTRIVTPERRERLRQSGERLRQSGERLK) adopt a coiled-coil conformation. Basic and acidic residues predominate over residues 230–255 (RERLRQSGERLRQSGERLKQSGERFK). 2 disordered regions span residues 230–283 (RERL…AVAE) and 310–346 (PEAL…FKPQ). A Phosphothreonine modification is found at T335. Residue S354 is modified to Phosphoserine.

Belongs to the CAVIN family. As to quaternary structure, component of the CAVIN complex composed of CAVIN1, CAVIN2, CAVIN3 and CAVIN4. Interacts with CAVIN1, ADRA1A, ADRA1B, MAPK1 and MAPK3. Interacts with CAVIN2; this augments the transactivation of NPPA.

The protein localises to the cytoplasm. The protein resides in the myofibril. It is found in the sarcomere. Its subcellular location is the cytosol. It localises to the cell membrane. The protein localises to the sarcolemma. The protein resides in the membrane. It is found in the caveola. Functionally, modulates the morphology of formed caveolae in cardiomyocytes, but is not required for caveolar formation. Facilitates the recruitment of MAPK1/3 to caveolae within cardiomyocytes and regulates alpha-1 adrenergic receptor-induced hypertrophic responses in cardiomyocytes through MAPK1/3 activation. Contributes to proper membrane localization and stabilization of caveolin-3 (CAV3) in cardiomyocytes. Induces RHOA activation and activates NPPA transcription and myofibrillar organization through the Rho/ROCK signaling pathway. The protein is Caveolae-associated protein 4 (CAVIN4) of Bos taurus (Bovine).